A 1190-amino-acid polypeptide reads, in one-letter code: Phosphatidylinositol-3,5-bisphosphate 3-phosphatase MTMR4 (1190 aa).

The residue at position 8 (serine 8) is a Phosphoserine. The Myotubularin phosphatase domain occupies 153–570 (EHIRCRQEAE…RALHLWTAVY (418 aa)). A 1,2-diacyl-sn-glycero-3-phospho-(1D-myo-inositol-3,5-bisphosphate)-binding residues include asparagine 320, asparagine 345, and isoleucine 346. Asparagine 320, asparagine 345, and isoleucine 346 together coordinate a 1,2-diacyl-sn-glycero-3-phospho-(1D-myo-inositol-3-phosphate). The active-site Phosphocysteine intermediate is the cysteine 407. A 1,2-diacyl-sn-glycero-3-phospho-(1D-myo-inositol-3,5-bisphosphate) is bound by residues serine 408, aspartate 409, glycine 410, tryptophan 411, aspartate 412, arginine 413, lysine 449, and arginine 453. A 1,2-diacyl-sn-glycero-3-phospho-(1D-myo-inositol-3-phosphate) is bound by residues serine 408, aspartate 409, glycine 410, tryptophan 411, aspartate 412, and arginine 413. Arginine 453 is an a 1,2-diacyl-sn-glycero-3-phospho-(1D-myo-inositol-3-phosphate) binding site. Serine 610 and serine 629 each carry phosphoserine. Disordered stretches follow at residues 616 to 694 (SACD…FKGH), 724 to 749 (ETEA…GKPP), and 773 to 848 (DFPE…PSSV). Residues 618–637 (CDTSSPLTRTSSDPNLNNHS) show a composition bias toward polar residues. The segment covering 782 to 847 (LTGTPQQPHL…SISHQEQPSS (66 aa)) has biased composition (polar residues). The PY-motif; substrate motif for NEDD4 motif lies at 999 to 1003 (VPPLY). Residues 1020-1052 (LRQIEAGYRQEVEQLRRQVRELQMRLDIRHCCA) are a coiled coil. The FYVE-type zinc-finger motif lies at 1109–1169 (DHMASHCFNC…VCNSCYEHIQ (61 aa)). Residues cysteine 1115, cysteine 1118, cysteine 1131, cysteine 1134, cysteine 1139, cysteine 1142, cysteine 1161, and cysteine 1164 each contribute to the Zn(2+) site.

The protein belongs to the protein-tyrosine phosphatase family. Non-receptor class myotubularin subfamily. Homooligomeric. Forms MTMR3:MTMR4 heterooligomers; regulates the localization of both proteins. The MTMR3:MTMR4 heterooligomer can also recruit both CEP55 and PLK1; occurs during early mitosis, regulates the phosphorylation of CEP55 by PLK1 and its recruitment to the midbody where it can mediate cell abscission. Interacts with SMAD2 and SMAD3; negatively regulates TGF-beta signaling through SMAD2 and SMAD3 dephosphorylation and retention in endosomes. Interacts with SMAD1; negatively regulates BMP signaling through SMAD1 dephosphorylation and retention in endosomes. Post-translationally, ubiquitinated. Ubiquitination by NEDD4 probably leads to proteasomal degradation. Phosphorylated by CDK1 during mitosis.

The protein localises to the early endosome membrane. It is found in the recycling endosome membrane. It localises to the late endosome membrane. Its subcellular location is the cytoplasmic vesicle. The protein resides in the phagosome membrane. It catalyses the reaction a 1,2-diacyl-sn-glycero-3-phospho-(1D-myo-inositol-3-phosphate) + H2O = a 1,2-diacyl-sn-glycero-3-phospho-(1D-myo-inositol) + phosphate. The catalysed reaction is a 1,2-diacyl-sn-glycero-3-phospho-(1D-myo-inositol-3,5-bisphosphate) + H2O = a 1,2-diacyl-sn-glycero-3-phospho-(1D-myo-inositol-5-phosphate) + phosphate. It carries out the reaction 1,2-dioctanoyl-sn-glycero-3-phospho-(1-D-myo-inositol-3-phosphate) + H2O = 1,2-dioctanoyl-sn-glycero-3-phospho-(1D-myo-inositol) + phosphate. The enzyme catalyses 1,2-dioctanoyl-sn-glycero-3-phospho-(1D-myo-inositol-3,5-bisphosphate) + H2O = 1,2-dioctanoyl-sn-glycero-3-phospho-(1D-myo-inositol-5-phosphate) + phosphate. In terms of biological role, lipid phosphatase that specifically dephosphorylates the D-3 position of phosphatidylinositol 3-phosphate and phosphatidylinositol 3,5-bisphosphate, generating phosphatidylinositol and phosphatidylinositol 5-phosphate. Decreases the levels of phosphatidylinositol 3-phosphate, a phospholipid found in cell membranes where it acts as key regulator of both cell signaling and intracellular membrane traffic, in a subset of endosomal membranes to negatively regulate both endocytic recycling and trafficking and/or maturation of endosomes toward lysosomes. Through phosphatidylinositol 3-phosphate turnover in phagosome membranes regulates phagocytosis and phagosome maturation. By decreasing phosphatidylinositol 3-monophosphate (PI3P) levels in immune cells it can also regulate the innate immune response. Beside its lipid phosphatase activity, can also function as a molecular adapter to regulate midbody abscission during mitotic cytokinesis. Can also negatively regulate TGF-beta and BMP signaling through Smad proteins dephosphorylation and retention in endosomes. In Mus musculus (Mouse), this protein is Phosphatidylinositol-3,5-bisphosphate 3-phosphatase MTMR4.